A 395-amino-acid chain; its full sequence is ADP-ribosylation factor-like protein 13A (395 aa).

GTP contacts are provided by residues 28 to 35, 71 to 75, and 130 to 133; these read GLDNSGKS, DLTGD, and NKQD.

This sequence belongs to the small GTPase superfamily. Arf family.

The chain is ADP-ribosylation factor-like protein 13A (Arl13a) from Rattus norvegicus (Rat).